A 504-amino-acid polypeptide reads, in one-letter code: MVSLLSFFLLLLVPIFFLLIFTKKIKESKQNLPPGPAKLPIIGNLHQLQGLLHKCLHDLSKKHGPVMHLRLGFAPMVVISSSEAAEEALKTHDLECCSRPITMASRVFSRNGKDIGFGVYGDEWRELRKLSVREFFSVKKVQSFKYIREEENDLMIKKLKELASKQSPVDLSKILFGLTASIIFRTAFGQSFFDNKHVDQESIKELMFESLSNMTFRFSDFFPTAGLKWFIGFVSGQHKRLYNVFNRVDTFFNHIVDDHHSKKATQDRPDMVDAILDMIDNEQQYASFKLTVDHLKGVLSNIYHAGIDTSAITLIWAMAELVRNPRVMKKAQDEIRTCIGIKQEGRIMEEDLDKLQYLKLVVKETLRLHPAAPLLLPRETMADIKIQGYDIPQKRALLVNAWSIGRDPESWKNPEEFNPERFIDCPVDYKGHSFELLPFGSGRRICPGIAMAIATIELGLLNLLYFFDWNMPEKKKDMDMEEAGDLTVDKKVPLELLPVIRISL.

The helical transmembrane segment at 1 to 21 (MVSLLSFFLLLLVPIFFLLIF) threads the bilayer. Residue cysteine 446 coordinates heme.

It belongs to the cytochrome P450 family. The cofactor is heme.

Its subcellular location is the membrane. This Arabidopsis thaliana (Mouse-ear cress) protein is Cytochrome P450 71B4 (CYP71B4).